We begin with the raw amino-acid sequence, 839 residues long: Dynein axonemal assembly factor 5 (839 aa).

HEAT repeat units follow at residues 10–48, 54–92, 94–137, 140–178, 181–219, 221–257, 259–297, 578–617, 675–713, 717–755, and 723–761; these read TSDV…DEKL, QHVF…HVPR, EEAL…VCGK, APYL…CIPE, HMQA…YSSG, SVDD…KLQD, YSFF…QWEK, GETL…KASE, LQVE…TCER, PDKL…CITD, and IYPE…ERTT.

Belongs to the DNAAF5 family. As to quaternary structure, interacts with DNAI2; probably involved in outer arm dynein assembly.

It localises to the cytoplasm. The protein localises to the dynein axonemal particle. In terms of biological role, cytoplasmic protein involved in the delivery of the dynein machinery to the motile cilium. It is required for the assembly of the axonemal dynein inner and outer arms, two structures attached to the peripheral outer doublet A microtubule of the axoneme, that play a crucial role in cilium motility. The polypeptide is Dynein axonemal assembly factor 5 (Xenopus laevis (African clawed frog)).